Reading from the N-terminus, the 674-residue chain is Dystrophia myotonica WD repeat-containing protein (674 aa).

The residue at position 2 (alanine 2) is an N-acetylalanine. Disordered stretches follow at residues 31–92 and 103–122; these read GFYK…PALP and EPDS…LGSG. Pro residues predominate over residues 53-65; it reads PVPPQPPQPPPGP. Over residues 66 to 77 the composition is skewed to low complexity; sequence ASASGPGAAGPA. The span at 78-90 shows a compositional bias: pro residues; that stretch reads SSPPPAGPGPGPA. The span at 107–118 shows a compositional bias: low complexity; that stretch reads AGAGEPPATPAG. 5 WD repeats span residues 211-251, 282-321, 324-363, 366-409, and 413-453; these read IDKT…ASAP, VGEG…LRGL, SYFG…VVAR, GHKS…EAAG, and AGGA…LYPH. 4 disordered regions span residues 384 to 419, 456 to 516, 532 to 573, and 637 to 674; these read EEAA…APLS, LART…EPGT, RDRG…RSRL, and DEET…GTVV. 2 stretches are compositionally biased toward low complexity: residues 457–478 and 487–499; these read ARTR…SSRG and PRSL…LPHP. Serine 495 is subject to Phosphoserine. 2 stretches are compositionally biased toward gly residues: residues 500–509 and 550–563; these read AGGGKAGGPG and SRGG…GGEK. Position 551 is an omega-N-methylarginine (arginine 551). The WD 6 repeat unit spans residues 601-638; that stretch reads IAQERLTVLLFLEDCIITACQEGLICTWARPGKAFTDE. The segment covering 642 to 674 has biased composition (polar residues); that stretch reads AQTGEGSWPRSPSKSVVEGISSQPGNSPSGTVV.

In terms of assembly, component of the USP12/DMWD/WDR48 deubiquitinating complex. Interacts with USP12; promotes its enzymatic activity. Interacts with USP46.

It localises to the cytoplasm. Its subcellular location is the nucleus. The protein localises to the perikaryon. It is found in the cell projection. The protein resides in the dendrite. Its function is as follows. Regulator of the deubiquitinating USP12/DMWD/WDR48 complex. Functions as a cofactor that promotes USP12 enzymatic activity. This Homo sapiens (Human) protein is Dystrophia myotonica WD repeat-containing protein.